The following is a 906-amino-acid chain: Cadherin-2 (906 aa).

Positions M1–A25 are cleaved as a signal peptide. The propeptide occupies S26 to R159. S96 bears the Phosphoserine mark. Cadherin domains are found at residues D160–F267, L268–F382, T383–F497, A498–P603, and Q604–G717. The Extracellular segment spans residues D160–T724. A Ca(2+)-binding site is contributed by E170. N-linked (GlcNAc...) asparagine glycosylation occurs at N190. Residues D226, E228, D259, M260, N261, D262, and N263 each coordinate Ca(2+). The N-linked (GlcNAc...) asparagine glycan is linked to N273. Ca(2+) is bound by residues D293, D295, and N301. N325 carries an N-linked (GlcNAc...) asparagine glycan. D353 lines the Ca(2+) pocket. 5 N-linked (GlcNAc...) asparagine glycosylation sites follow: N402, N572, N622, N651, and N692. A helical transmembrane segment spans residues I725–W745. The Cytoplasmic segment spans residues M746 to D906. Low complexity predominate over residues S863–G880. The segment at S863–D883 is disordered.

As to quaternary structure, homodimer (via extracellular region). Can also form heterodimers with other cadherins (via extracellular region). Dimerization occurs in trans, i.e. with a cadherin chain from another cell. Interacts with PCDH8; this complex may also include TAOK2. The interaction with PCDH8 may lead to internalization through TAOK2/p38 MAPK pathway. Identified in a complex containing FGFR4, NCAM1, CDH2, PLCG1, FRS2, SRC, SHC1, GAP43 and CTTN. May interact with OBSCN (via protein kinase domain 2). Interacts with FBXO45. In terms of processing, cleaved by MMP24. Ectodomain cleavage leads to the generation of a soluble 90 kDa N-terminal soluble fragment and a 45 kDa membrane-bound C-terminal fragment 1 (CTF1), which is further cleaved by gamma-secretase into a 35 kDa. Cleavage in neural stem cells by MMP24 affects CDH2-mediated anchorage of neural stem cells to ependymocytes in the adult subependymal zone, leading to modulate neural stem cell quiescence. Post-translationally, may be phosphorylated by OBSCN. In terms of tissue distribution, in testis, expressed in Sertoli and germ cells.

It is found in the cell membrane. The protein localises to the sarcolemma. The protein resides in the cell junction. Its subcellular location is the cell surface. It localises to the desmosome. It is found in the adherens junction. Functionally, calcium-dependent cell adhesion protein; preferentially mediates homotypic cell-cell adhesion by dimerization with a CDH2 chain from another cell. Cadherins may thus contribute to the sorting of heterogeneous cell types. Acts as a regulator of neural stem cells quiescence by mediating anchorage of neural stem cells to ependymocytes in the adult subependymal zone: upon cleavage by MMP24, CDH2-mediated anchorage is affected, leading to modulate neural stem cell quiescence. Plays a role in cell-to-cell junction formation between pancreatic beta cells and neural crest stem (NCS) cells, promoting the formation of processes by NCS cells. Required for proper neurite branching. Required for pre- and postsynaptic organization. CDH2 may be involved in neuronal recognition mechanism. In hippocampal neurons, may regulate dendritic spine density. The protein is Cadherin-2 (Cdh2) of Rattus norvegicus (Rat).